The primary structure comprises 66 residues: Large ribosomal subunit protein bL35 (66 aa).

Residues 1–22 (MAYKLKSHRGAAKRFKKTASGG) are disordered.

Belongs to the bacterial ribosomal protein bL35 family.

The polypeptide is Large ribosomal subunit protein bL35 (Pseudoalteromonas translucida (strain TAC 125)).